Reading from the N-terminus, the 323-residue chain is Pantothenate kinase (323 aa).

Residue 101–108 coordinates ATP; that stretch reads GSVAVGKS.

This sequence belongs to the prokaryotic pantothenate kinase family.

The protein localises to the cytoplasm. It carries out the reaction (R)-pantothenate + ATP = (R)-4'-phosphopantothenate + ADP + H(+). The protein operates within cofactor biosynthesis; coenzyme A biosynthesis; CoA from (R)-pantothenate: step 1/5. This chain is Pantothenate kinase, found in Paenarthrobacter aurescens (strain TC1).